A 102-amino-acid chain; its full sequence is Monothiol glutaredoxin-S4 (102 aa).

In terms of domain architecture, Glutaredoxin spans 1-101 (MDKLQKMISE…PMLKRVGALW (101 aa)). C21 contributes to the [2Fe-2S] cluster binding site. Positions 99–102 (ALWL) match the Responsive for interaction with TGA factors motif.

Belongs to the glutaredoxin family. CC-type subfamily.

Its subcellular location is the cytoplasm. It localises to the nucleus. In terms of biological role, may only reduce GSH-thiol disulfides, but not protein disulfides. The polypeptide is Monothiol glutaredoxin-S4 (GRXS4) (Arabidopsis thaliana (Mouse-ear cress)).